The primary structure comprises 555 residues: Neutral amino acid transporter B(0) (555 aa).

Position 1 is an N-acetylmethionine (methionine 1). Residues 1-52 (MAVDPPKADPKGVVAVDPTANCGSGLKSREDQGAKAGGCCSSRDQVCRCLRA) lie on the Cytoplasmic side of the membrane. Residues 53-82 (NLLVLLTVAAAVAGVVLGLGVSAAGGAEAL) form a helical membrane-spanning segment. Residues 83 to 95 (GHARFTAFAFPGE) are Extracellular-facing. Residues 96 to 117 (LLLRLLEMIILPLVVCSLIGGA) form a helical membrane-spanning segment. Topologically, residues 118 to 131 (ASLDPSALGRLGAW) are cytoplasmic. A helical membrane pass occupies residues 132–154 (ALLFFLVTTLLSSALGVALALAL). Over 155 to 239 (KPGAAFAAIN…SNATMDQPHC (85 aa)) the chain is Extracellular. Residues asparagine 164 and asparagine 231 are each glycosylated (N-linked (GlcNAc...) asparagine). The helical transmembrane segment at 240-262 (EMKMNILGLVVFAIVFGVALRKL) threads the bilayer. Topologically, residues 263-271 (GPEGELLIR) are cytoplasmic. The helical transmembrane segment at 272–299 (FFNSFNDATMVLVSWIMWYAPIGILFLV) threads the bilayer. Topologically, residues 300 to 320 (AGKIVEMKDIRQLFIGLGKYI) are extracellular. The helical transmembrane segment at 321–342 (VCCLLGHAIHGLLVLPLIYFLF) threads the bilayer. Residues 343–347 (TRKNP) are Cytoplasmic-facing. An intramembrane region (discontinuously helical) is located at residues 348–378 (YRFLWGIVTPLATAFGTSSSSATLPLMMKCV). Over 379 to 387 (EEKNGVAKH) the chain is Cytoplasmic. The chain crosses the membrane as a helical span at residues 388–414 (ISRFILPIGATVNMDGAALFQCVAAVF). Glycine 396, threonine 398, and asparagine 400 together coordinate Na(+). The Extracellular portion of the chain corresponds to 415–427 (IAQLNGMSLDFVK). Positions 428-461 (IITILVTATASSVGAAGIPAGGVLTLAIILEAIS) form an intramembrane region, discontinuously helical. The Extracellular portion of the chain corresponds to 462-474 (LPVKDISLILAVD). The helical transmembrane segment at 475 to 496 (WLVDRSCTVLNVEGDAFGAGLL) threads the bilayer. Na(+) is bound by residues asparagine 485 and aspartate 489. Residues 497–555 (QSYVDRTKMPSSEPELIQVKNDVSLKPLPLATEEGNPLLKQCREPSGDSSATCEKESVM) lie on the Cytoplasmic side of the membrane. A phosphoserine mark is found at serine 507, serine 508, serine 520, serine 545, and serine 553. A disordered region spans residues 534–555 (LLKQCREPSGDSSATCEKESVM).

It belongs to the dicarboxylate/amino acid:cation symporter (DAACS) (TC 2.A.23) family. Homotrimer.

Its subcellular location is the cell membrane. The protein resides in the melanosome. The catalysed reaction is L-glutamine(out) + L-serine(in) + Na(+)(out) = L-glutamine(in) + L-serine(out) + Na(+)(in). It catalyses the reaction L-glutamine(in) + L-serine(out) + Na(+)(out) = L-glutamine(out) + L-serine(in) + Na(+)(in). The enzyme catalyses L-threonine(in) + L-glutamine(out) + Na(+)(out) = L-threonine(out) + L-glutamine(in) + Na(+)(in). It carries out the reaction L-threonine(out) + L-glutamine(in) + Na(+)(out) = L-threonine(in) + L-glutamine(out) + Na(+)(in). The catalysed reaction is L-asparagine(in) + L-glutamine(out) + Na(+)(out) = L-asparagine(out) + L-glutamine(in) + Na(+)(in). It catalyses the reaction L-asparagine(out) + L-glutamine(in) + Na(+)(out) = L-asparagine(in) + L-glutamine(out) + Na(+)(in). The enzyme catalyses L-glutamine(in) + L-alanine(out) + Na(+)(out) = L-glutamine(out) + L-alanine(in) + Na(+)(in). It carries out the reaction L-valine(out) + L-glutamine(in) + Na(+)(out) = L-valine(in) + L-glutamine(out) + Na(+)(in). The catalysed reaction is L-glutamine(in) + L-methionine(out) + Na(+)(out) = L-glutamine(out) + L-methionine(in) + Na(+)(in). It catalyses the reaction L-glutamine(in) + L-glutamate(out) + Na(+)(out) + H(+)(out) = L-glutamine(out) + L-glutamate(in) + Na(+)(in) + H(+)(in). The enzyme catalyses D-serine(in) + L-glutamine(out) + Na(+)(out) = D-serine(out) + L-glutamine(in) + Na(+)(in). It carries out the reaction D-serine(in) + L-alanine(out) + Na(+)(out) = D-serine(out) + L-alanine(in) + Na(+)(in). The catalysed reaction is nitrate(in) = nitrate(out). It catalyses the reaction iodide(out) = iodide(in). The enzyme catalyses thiocyanate(in) = thiocyanate(out). Down-regulated at acidic pH. Functionally, sodium-coupled antiporter of neutral amino acids. In a tri-substrate transport cycle, exchanges neutral amino acids between the extracellular and intracellular compartments, coupled to the inward cotransport of at least one sodium ion. The preferred substrate is the essential amino acid L-glutamine, a precursor for biosynthesis of proteins, nucleotides and amine sugars as well as an alternative fuel for mitochondrial oxidative phosphorylation. Exchanges L-glutamine with other neutral amino acids such as L-serine, L-threonine and L-asparagine in a bidirectional way. Provides L-glutamine to proliferating stem and activated cells driving the metabolic switch toward cell differentiation. The transport cycle is usually pH-independent, with the exception of L-glutamate. Transports extracellular L-glutamate coupled to the cotransport of one proton and one sodium ion in exchange for intracellular L-glutamine counter-ion. May provide for L-glutamate uptake in glial cells regulating glutamine/glutamate cycle in the nervous system. Can transport D-amino acids. Mediates D-serine release from the retinal glia potentially affecting NMDA receptor function in retinal neurons. Displays sodium- and amino acid-dependent but uncoupled channel-like anion conductance with a preference SCN(-) &gt;&gt; NO3(-) &gt; I(-) &gt; Cl(-). Through binding of the fusogenic protein syncytin-1/ERVW-1 may mediate trophoblasts syncytialization, the spontaneous fusion of their plasma membranes, an essential process in placental development. In Rattus norvegicus (Rat), this protein is Neutral amino acid transporter B(0) (Slc1a5).